The chain runs to 397 residues: Chorismate synthase (397 aa).

NADP(+) is bound by residues R40 and R46. Residues 129 to 131 (RSS), 257 to 258 (QA), G302, 317 to 321 (KPISS), and R343 contribute to the FMN site.

The protein belongs to the chorismate synthase family. Homotetramer. The cofactor is FMNH2.

The enzyme catalyses 5-O-(1-carboxyvinyl)-3-phosphoshikimate = chorismate + phosphate. It participates in metabolic intermediate biosynthesis; chorismate biosynthesis; chorismate from D-erythrose 4-phosphate and phosphoenolpyruvate: step 7/7. Catalyzes the anti-1,4-elimination of the C-3 phosphate and the C-6 proR hydrogen from 5-enolpyruvylshikimate-3-phosphate (EPSP) to yield chorismate, which is the branch point compound that serves as the starting substrate for the three terminal pathways of aromatic amino acid biosynthesis. This reaction introduces a second double bond into the aromatic ring system. This Chlorobaculum tepidum (strain ATCC 49652 / DSM 12025 / NBRC 103806 / TLS) (Chlorobium tepidum) protein is Chorismate synthase.